The primary structure comprises 250 residues: Probable chemoreceptor glutamine deamidase CheD (250 aa).

This sequence belongs to the CheD family.

The enzyme catalyses L-glutaminyl-[protein] + H2O = L-glutamyl-[protein] + NH4(+). Functionally, probably deamidates glutamine residues to glutamate on methyl-accepting chemotaxis receptors (MCPs), playing an important role in chemotaxis. The sequence is that of Probable chemoreceptor glutamine deamidase CheD from Paraburkholderia xenovorans (strain LB400).